The following is a 1385-amino-acid chain: MTLDDLFTVRGSAANIANIRNLKAIQITIASPENIREWSYGEVKKPETINYRTFKPERDGLFCAKIFGPVKDYECNCGKYKRMKHRGIVCEKCGVEVIASKVRRERMGHIELAAPVAHIWFLKTLPSKIGTLLDMTMADLEKVLYFDSYIVLDPGSTNLTKMQVISEDQYLQVIDHYGEDALTVGMGAEAVRSLLEELNLEELRVQLREESQATKSQTKKKKLTKRLKIVEAFLESNNKPEWMVMEVIPVIPPELRPLVPLDGGRFATSDLNDLYRRVINRNNRLKRLMELGAPDIIIRNEKRMLQEAVDALFDNGRRGRAITGTNGRPLKSLSDMIKGKQGRFRQNLLGKRVDYSGRSVIVVGPKLKLHQCGLPKKMALELFKPFIYSELEKRGLASTIKSAKKMVEREELVVWDILEEVVREYPIMLNRAPTLHRLGIQSFEPLLVEGKAIQLHPLVCSAYNADFDGDQMAVHVPLSVEAQIECRVLMMSTNNILSPANGSPVIVPSQDIVLGLYYMTVDRSFEKGENMSFCAPWEVVAAYDAGVVALHARINVRMEDGKVVRTTVGRILVWELLPHCVPFSMVNTTLTKKNIARLVSTAYRDAGTKATVILCDRLKDVGYEYATRAGVTIAVKDLTIPSTKKGLIETAQNEVDDIERQYRDGIITRTEKYNKVVDVWTKATQDVSNEMIREISSDIVEDPRTGAKEANSSFNSIYMMSTSGARGNQDQMRQLAGMRGLMAKPSGEIIETPITSSFREGLSVLQYFTSTHGARKGLADTALKTANSGYLTRRLVDVVQDVIVSEHDCGTVDGIELTHIKEGGEIKIPLADRALGRVLLYPVYDPETRDLLFPENTLVDENVAKVLVEREVSSVMIRSALTCQSDRGICTLCYGRDLARGHIVNIGETVGIIAAQSIGEPGTQLTMRTFHIGGTASREIERSSFEAQHPGRVILSRVKAVRNRDGQYMVMGKSGQLAIVDDQGREREKYTLPNGSRLLVTEGEEIRKGQILAEWDPFNEPFVSEVDGVIRFSDIVEGKTFQEKMDEATRMTTQTIIEYRTTNFRPSISICDEHGEVKMRGNNIPATYSLPVGAIIMVKNGQDLQAGDIIARKPRETSKTKDIVGGLPRVAELFEVRKPKDMAVVSEIAGIVTYAGETKGKRKLVVTPEIGEAKEYLVPKGKHITVTDGDFVEAGDLLTEGHPELHDILRTRGEKYLARYLTDEIQEVYRFQGVAIDDKHIEVIVRQMLKKVTVLDPGGTTFLVGEQVDKGEFRVENTRAMGEGRTPATAEPLVLGITQASLTTSSFISAASFQETTKVLTEASLRGKMDYLRGLKENVIVGRLIPAGTGYREYVNTDILVPEQRERPDKFLEDLEENPLLVDIY.

Zn(2+)-binding residues include Cys-75, Cys-77, Cys-90, and Cys-93. Mg(2+) contacts are provided by Asp-466, Asp-468, and Asp-470. Residues Cys-809, Cys-883, Cys-890, and Cys-893 each contribute to the Zn(2+) site.

Belongs to the RNA polymerase beta' chain family. In terms of assembly, the RNAP catalytic core consists of 2 alpha, 1 beta, 1 beta' and 1 omega subunit. When a sigma factor is associated with the core the holoenzyme is formed, which can initiate transcription. It depends on Mg(2+) as a cofactor. Requires Zn(2+) as cofactor.

The catalysed reaction is RNA(n) + a ribonucleoside 5'-triphosphate = RNA(n+1) + diphosphate. DNA-dependent RNA polymerase catalyzes the transcription of DNA into RNA using the four ribonucleoside triphosphates as substrates. In Nitratidesulfovibrio vulgaris (strain ATCC 29579 / DSM 644 / CCUG 34227 / NCIMB 8303 / VKM B-1760 / Hildenborough) (Desulfovibrio vulgaris), this protein is DNA-directed RNA polymerase subunit beta'.